A 184-amino-acid chain; its full sequence is ATP synthase subunit b, chloroplastic (184 aa).

A helical transmembrane segment spans residues 27 to 49 (LATNPINLSVVLGVLIFFGKGVL).

The protein belongs to the ATPase B chain family. F-type ATPases have 2 components, F(1) - the catalytic core - and F(0) - the membrane proton channel. F(1) has five subunits: alpha(3), beta(3), gamma(1), delta(1), epsilon(1). F(0) has four main subunits: a(1), b(1), b'(1) and c(10-14). The alpha and beta chains form an alternating ring which encloses part of the gamma chain. F(1) is attached to F(0) by a central stalk formed by the gamma and epsilon chains, while a peripheral stalk is formed by the delta, b and b' chains.

Its subcellular location is the plastid. It is found in the chloroplast thylakoid membrane. Functionally, f(1)F(0) ATP synthase produces ATP from ADP in the presence of a proton or sodium gradient. F-type ATPases consist of two structural domains, F(1) containing the extramembraneous catalytic core and F(0) containing the membrane proton channel, linked together by a central stalk and a peripheral stalk. During catalysis, ATP synthesis in the catalytic domain of F(1) is coupled via a rotary mechanism of the central stalk subunits to proton translocation. Component of the F(0) channel, it forms part of the peripheral stalk, linking F(1) to F(0). The sequence is that of ATP synthase subunit b, chloroplastic from Solanum bulbocastanum (Wild potato).